We begin with the raw amino-acid sequence, 725 residues long: Eukaryotic elongation factor 2 kinase (725 aa).

Residues 1–12 are compositionally biased toward basic and acidic residues; the sequence is MADEDLIFRLEG. The interval 1 to 38 is disordered; it reads MADEDLIFRLEGVDGGQSPRAGHDGDSDGDSDDEEGYF. At Ala-2 the chain carries N-acetylalanine. Residues Ser-18 and Ser-27 each carry the phosphoserine modification. Residues 27–36 are compositionally biased toward acidic residues; the sequence is SDGDSDDEEG. A phosphoserine; by autocatalysis mark is found at Ser-61 and Ser-66. Residues Ser-70, Ser-71, Ser-72, and Ser-74 each carry the phosphoserine modification. Position 78 is a phosphoserine; by autocatalysis and TRPM7 (Ser-78). The calmodulin-binding stretch occupies residues 81–94; it reads FKEAWKHAIQKAKH. The region spanning 116 to 326 is the Alpha-type protein kinase domain; the sequence is RYNAVTGEWL…ICESMGLAPF (211 aa). Ser-243 carries the post-translational modification Phosphoserine. An ATP-binding site is contributed by 296–302; it reads GDGNLGV. 2 positions are modified to phosphothreonine; by autocatalysis: Thr-348 and Thr-353. 2 disordered regions span residues 352 to 405 and 423 to 477; these read GTEE…PHSQ and SRDH…SLGS. Ser-359 bears the Phosphoserine; by MAPK13 and CDK1 mark. The segment covering 363-377 has biased composition (low complexity); sequence RTLSGSRPPLLRPLS. Ser-366 is subject to Phosphoserine; by autocatalysis, RPS6KA1 and RPS6KB1. Residues 386–404 show a composition bias toward polar residues; sequence SDVTFDSLPSSPSSATPHS. Ser-392 is modified (phosphoserine). Ser-398 carries the phosphoserine; by AMPK modification. Composition is skewed to basic and acidic residues over residues 423-436 and 445-469; these read SRDH…RESE and SEKR…RKYE. A Phosphoserine modification is found at Ser-435. Ser-445 is modified (phosphoserine; by autocatalysis). A Phosphoserine modification is found at Ser-470. Ser-474 carries the phosphoserine; by autocatalysis modification. At Ser-477 the chain carries Phosphoserine. Ser-491 is modified (phosphoserine; by autocatalysis). Ser-500 carries the phosphoserine; by PKA modification.

It belongs to the protein kinase superfamily. Alpha-type protein kinase family. Monomer or homodimer. Interacts with Calmodulin/CALM1; this interaction is strictly required for phosphorylation activity. In terms of processing, autophosphorylated at multiple residues, Thr-348 being the major site. Phosphorylated by AMP-activated protein kinase AMPK at Ser-398 leading to EEF2K activation and protein synthesis inhibition. Phosphorylated by TRPM7 at Ser-78 resulting in improved protein stability, higher EE2F phosphorylated and subsequently reduced rate of protein synthesis. Phosphorylation by other kinases such as CDK1 and MAPK13 at Ser-359 or RPS6KA1 and RPS6KB1 at Ser-366 instead decrease EEF2K activity and promote protein synthesis.

It carries out the reaction [translation elongation factor 2] + ATP = [translation elongation factor 2]-phosphate + ADP + H(+). Undergoes calcium/calmodulin-dependent intramolecular autophosphorylation, and this results in it becoming partially calcium/calmodulin-independent. Its function is as follows. Threonine kinase that regulates protein synthesis by controlling the rate of peptide chain elongation. Upon activation by a variety of upstream kinases including AMPK or TRPM7, phosphorylates the elongation factor EEF2 at a single site, renders it unable to bind ribosomes and thus inactive. In turn, the rate of protein synthesis is reduced. The sequence is that of Eukaryotic elongation factor 2 kinase (EEF2K) from Homo sapiens (Human).